The following is a 190-amino-acid chain: Ribose 1,5-bisphosphate phosphokinase PhnN (190 aa).

G10 to D17 provides a ligand contact to ATP.

Belongs to the ribose 1,5-bisphosphokinase family.

It catalyses the reaction alpha-D-ribose 1,5-bisphosphate + ATP = 5-phospho-alpha-D-ribose 1-diphosphate + ADP. Its pathway is metabolic intermediate biosynthesis; 5-phospho-alpha-D-ribose 1-diphosphate biosynthesis; 5-phospho-alpha-D-ribose 1-diphosphate from D-ribose 5-phosphate (route II): step 3/3. Functionally, catalyzes the phosphorylation of ribose 1,5-bisphosphate to 5-phospho-D-ribosyl alpha-1-diphosphate (PRPP). This Pseudomonas fluorescens (strain SBW25) protein is Ribose 1,5-bisphosphate phosphokinase PhnN.